The sequence spans 582 residues: Heterogeneous nuclear ribonucleoprotein C homolog (582 aa).

Residues 1-21 form a disordered region; sequence MSEALETGDPSPPPPIVSENG. 3 C2H2-type zinc fingers span residues 102–125, 130–154, and 213–235; these read YYCC…RGYH, SSCD…RRTH, and YACL…VEMH.

It is found in the nucleus. This is Heterogeneous nuclear ribonucleoprotein C homolog from Caenorhabditis elegans.